Here is a 236-residue protein sequence, read N- to C-terminus: Large ribosomal subunit protein eL6 (236 aa).

Belongs to the eukaryotic ribosomal protein eL6 family.

The sequence is that of Large ribosomal subunit protein eL6 (rpl6) from Dictyostelium discoideum (Social amoeba).